We begin with the raw amino-acid sequence, 136 residues long: Large ribosomal subunit protein uL16c (136 aa).

A disordered region spans residues 1-20 (MLSPKRTRFRKQHRGRMKGK).

It belongs to the universal ribosomal protein uL16 family. As to quaternary structure, part of the 50S ribosomal subunit.

The protein resides in the plastid. Its subcellular location is the chloroplast. This is Large ribosomal subunit protein uL16c from Lolium perenne (Perennial ryegrass).